Reading from the N-terminus, the 403-residue chain is Guanine nucleotide-binding protein alpha-8 subunit (403 aa).

Residue Gly-2 is the site of N-myristoyl glycine attachment. Cys-3 is lipidated: S-palmitoyl cysteine. The region spanning 31–356 (LDFRILLLGA…KVLMKATKDL (326 aa)) is the G-alpha domain. Residues 34 to 47 (RILLLGAGESGKST) form a G1 motif region. GTP is bound by residues 39 to 46 (GAGESGKS), 174 to 180 (IMTRVRT), 199 to 203 (DVGGQ), 268 to 271 (NKKD), and Ala-324. 2 residues coordinate Mg(2+): Ser-46 and Thr-180. The tract at residues 172-180 (DCIMTRVRT) is G2 motif. The G3 motif stretch occupies residues 195–204 (FRVVDVGGQR). Positions 264 to 271 (FLVLNKKD) are G4 motif. Residues 322 to 327 (IAARYK) are G5 motif. Residues 353–403 (TKDLKKSSKQSSKSSLGNSTQNNSNNNNNNNNSNNNNGQTTIDGATAKINS) are disordered. A compositionally biased stretch (low complexity) spans 374–389 (NNSNNNNNNNNSNNNN). Over residues 390–403 (GQTTIDGATAKINS) the composition is skewed to polar residues.

It belongs to the G-alpha family. In terms of assembly, g proteins are composed of 3 units; alpha, beta and gamma. The alpha chain contains the guanine nucleotide binding site.

Guanine nucleotide-binding proteins (G proteins) are involved as modulators or transducers in various transmembrane signaling systems. G alpha-8 is a potential analog for the G(s)-like G-proteins which stimulate adenylate cyclase in mammals. The polypeptide is Guanine nucleotide-binding protein alpha-8 subunit (gpaH) (Dictyostelium discoideum (Social amoeba)).